We begin with the raw amino-acid sequence, 681 residues long: Proton channel OTOP3 (681 aa).

The segment covering 1–25 has biased composition (basic and acidic residues); sequence MLSKEEPACRQFHSREKTWGNEHNG. The segment at 1-26 is disordered; the sequence is MLSKEEPACRQFHSREKTWGNEHNGK. Topologically, residues 1-112 are cytoplasmic; sequence MLSKEEPACR…LHQRAKKTGR (112 aa). Residues 113 to 133 form a helical membrane-spanning segment; it reads LFSGLFGLNLMFLGGTVVSSV. At 134-143 the chain is on the extracellular side; the sequence is ALSNKAVPER. The chain crosses the membrane as a helical span at residues 144 to 166; sequence DSQSFLCILMLLSSVWALYHLLF. At 167 to 182 the chain is on the cytoplasmic side; the sequence is IRNQNGAVHHDHHAGA. Residues 183–204 form a helical membrane-spanning segment; sequence MWLKASLAIFGVCSIILSIFEI. The Extracellular portion of the chain corresponds to 205 to 216; that stretch reads GHALLLQNCEIL. The helical transmembrane segment at 217 to 240 threads the bilayer; that stretch reads MDIVFFSIEIVFVSVQTVLLWVSC. Topologically, residues 241–248 are cytoplasmic; it reads KDCVQMHH. The chain crosses the membrane as a helical span at residues 249–271; the sequence is SVTRYGIMLTLATDILLWLTAVI. Residues 272–317 are Extracellular-facing; sequence DDSLEQDLEILQSNSTQDESNEMAQCQCPTDSMCWGLKQGYVTMFP. The chain crosses the membrane as a helical span at residues 318 to 334; the sequence is FNIEYSLICATLLFIMW. At 335–358 the chain is on the cytoplasmic side; that stretch reads KNVGRREKLHSDPPRHTFQLRGII. Residues 359–378 form a helical membrane-spanning segment; sequence YGPLIGGAALLVGISVFVQY. At 379 to 392 the chain is on the extracellular side; that stretch reads QVEATSGMVSILSY. The chain crosses the membrane as a helical span at residues 393 to 415; that stretch reads HMYYGYKMIILAPMIVCSVAGII. Over 416–507 the chain is Cytoplasmic; the sequence is AHSLREKEKK…QGKMKNYTRK (92 aa). Residues 508–529 form a helical membrane-spanning segment; the sequence is LDVTLLFVSAVGQLGISYFSII. Residues 530–540 lie on the Extracellular side of the membrane; the sequence is ATVVTTPWTML. Residues 541–563 traverse the membrane as a helical segment; that stretch reads SALNFSNSLLLILQYLSQTMFII. Topologically, residues 564 to 614 are cytoplasmic; sequence ESMRSIHEEEKEKPGHHEESHRRMSVQEMHKAPPSCLDAGHLGLSRRVVKE. A helical transmembrane segment spans residues 615-632; that stretch reads MAMFLMICNIMCWILGAF. The Extracellular segment spans residues 633–651; that stretch reads GAHPLYMNGLERQLYGSGI. The helical transmembrane segment at 652-674 threads the bilayer; that stretch reads WLAILNIGLPLSVFYRMHSVGIL. The Cytoplasmic segment spans residues 675-681; sequence LEVYLHA.

This sequence belongs to the otopetrin family. In terms of assembly, homodimer.

It is found in the cell membrane. It catalyses the reaction H(+)(in) = H(+)(out). PH regulates the proton channel activity from both sides of the plasma membrane. Low pH activates the channel from the extracellular side but inactivates the channel on the intracellular side. Zn(2+) and Ca(2+) can partially block the channel. In terms of biological role, proton-selective channel gated by extracellular protons. The polypeptide is Proton channel OTOP3 (otop3) (Xenopus tropicalis (Western clawed frog)).